We begin with the raw amino-acid sequence, 375 residues long: Chaperone protein DnaJ (375 aa).

The 66-residue stretch at 4–69 (DLYETLGVQK…QKRAAYDRYG (66 aa)) folds into the J domain. The segment at 133–211 (GKTAQIRVPT…CHGQGRVVEE (79 aa)) adopts a CR-type zinc-finger fold. Cys-146, Cys-149, Cys-163, Cys-166, Cys-185, Cys-188, Cys-199, and Cys-202 together coordinate Zn(2+). 4 CXXCXGXG motif repeats span residues 146 to 153 (CDVCTGTG), 163 to 170 (CGTCQGTG), 185 to 192 (CPTCGGRG), and 199 to 206 (CTKCHGQG).

This sequence belongs to the DnaJ family. In terms of assembly, homodimer. The cofactor is Zn(2+).

The protein localises to the cytoplasm. Functionally, participates actively in the response to hyperosmotic and heat shock by preventing the aggregation of stress-denatured proteins and by disaggregating proteins, also in an autonomous, DnaK-independent fashion. Unfolded proteins bind initially to DnaJ; upon interaction with the DnaJ-bound protein, DnaK hydrolyzes its bound ATP, resulting in the formation of a stable complex. GrpE releases ADP from DnaK; ATP binding to DnaK triggers the release of the substrate protein, thus completing the reaction cycle. Several rounds of ATP-dependent interactions between DnaJ, DnaK and GrpE are required for fully efficient folding. Also involved, together with DnaK and GrpE, in the DNA replication of plasmids through activation of initiation proteins. The protein is Chaperone protein DnaJ of Sinorhizobium medicae (strain WSM419) (Ensifer medicae).